The following is a 343-amino-acid chain: UDP-glucuronic acid decarboxylase 6 (343 aa).

Residues M1–R22 are disordered. A2 carries the post-translational modification N-acetylalanine. Residue D62–D87 coordinates NAD(+). R171 is a substrate binding site. The active-site Proton acceptor is Y174. NAD(+) is bound at residue Y174–K178. N203 is a substrate binding site. NAD(+) is bound at residue R215. Residues V216–F220, Q233–R240, and D300–R304 each bind substrate.

It belongs to the NAD(P)-dependent epimerase/dehydratase family. UDP-glucuronic acid decarboxylase subfamily. Requires NAD(+) as cofactor.

It is found in the cytoplasm. It catalyses the reaction UDP-alpha-D-glucuronate + H(+) = UDP-alpha-D-xylose + CO2. It participates in nucleotide-sugar biosynthesis; UDP-alpha-D-xylose biosynthesis; UDP-alpha-D-xylose from UDP-alpha-D-glucuronate: step 1/1. Catalyzes the NAD-dependent decarboxylation of UDP-glucuronic acid to UDP-xylose. Necessary for the biosynthesis of the core tetrasaccharide in glycosaminoglycan biosynthesis. This chain is UDP-glucuronic acid decarboxylase 6 (UXS6), found in Arabidopsis thaliana (Mouse-ear cress).